A 292-amino-acid polypeptide reads, in one-letter code: Ribosomal protein L11 methyltransferase (292 aa).

S-adenosyl-L-methionine-binding residues include Thr143, Gly164, Asp186, and Asn228.

The protein belongs to the methyltransferase superfamily. PrmA family.

Its subcellular location is the cytoplasm. The catalysed reaction is L-lysyl-[protein] + 3 S-adenosyl-L-methionine = N(6),N(6),N(6)-trimethyl-L-lysyl-[protein] + 3 S-adenosyl-L-homocysteine + 3 H(+). Functionally, methylates ribosomal protein L11. This is Ribosomal protein L11 methyltransferase from Aeromonas hydrophila subsp. hydrophila (strain ATCC 7966 / DSM 30187 / BCRC 13018 / CCUG 14551 / JCM 1027 / KCTC 2358 / NCIMB 9240 / NCTC 8049).